The chain runs to 156 residues: Small ribosomal subunit protein uS7c (156 aa).

The protein belongs to the universal ribosomal protein uS7 family. Part of the 30S ribosomal subunit.

The protein resides in the plastid. The protein localises to the chloroplast. Its function is as follows. One of the primary rRNA binding proteins, it binds directly to 16S rRNA where it nucleates assembly of the head domain of the 30S subunit. The protein is Small ribosomal subunit protein uS7c (rps7) of Bowenia serrulata (Byfield fern).